We begin with the raw amino-acid sequence, 90 residues long: Probable Fe(2+)-trafficking protein (90 aa).

It belongs to the Fe(2+)-trafficking protein family.

Could be a mediator in iron transactions between iron acquisition and iron-requiring processes, such as synthesis and/or repair of Fe-S clusters in biosynthetic enzymes. The chain is Probable Fe(2+)-trafficking protein from Aliivibrio fischeri (strain ATCC 700601 / ES114) (Vibrio fischeri).